A 433-amino-acid polypeptide reads, in one-letter code: Keratin, type I cytoskeletal 47 kDa (433 aa).

Residues 1-73 are head; sequence MSYSTRSISQ…AFNVSVTSNN (73 aa). The tract at residues 74-109 is coil 1A; it reads GKETMQNLNDRLANYLDRVRSLEQANHELELKIREY. An IF rod domain is found at 74–385; sequence GKETMQNLND…RLLEGEDTRF (312 aa). Residues 110 to 127 are linker 1; it reads LDKKAAVGSLDYSGYYNT. Residues 128 to 219 are coil 1B; it reads INLLRSQIND…KNHEEELAVV (92 aa). The segment at 220-242 is linker 12; that stretch reads RSSARGNVDVQVDSAPPVDLAQI. The tract at residues 243-381 is coil 2; the sequence is MADVRSQYES…ATYRRLLEGE (139 aa). Residues 382 to 433 form a tail region; that stretch reads DTRFSQTETQKAVTIVSKEQSSSSIKKVKTVIEEVVDGKVVSSRVEELTETS.

Belongs to the intermediate filament family. Heterotetramer of two type I and two type II keratins.

In Xenopus laevis (African clawed frog), this protein is Keratin, type I cytoskeletal 47 kDa (xk70a).